The following is a 349-amino-acid chain: Aldehyde reductase YahK (349 aa).

Cys40, His62, Cys93, Cys96, Cys99, Cys107, and Cys158 together coordinate Zn(2+).

It belongs to the zinc-containing alcohol dehydrogenase family. It depends on Zn(2+) as a cofactor.

The catalysed reaction is a primary alcohol + NADP(+) = an aldehyde + NADPH + H(+). Its function is as follows. Catalyzes the reduction of a wide range of aldehydes into their corresponding alcohols. Has a strong preference for NADPH over NADH as the electron donor. Cannot use a ketone as substrate. Is a major source of NADPH-dependent aldehyde reductase activity in E.coli. The in vivo functions of YahK has yet to be determined. This Escherichia coli (strain K12) protein is Aldehyde reductase YahK (yahK).